We begin with the raw amino-acid sequence, 203 residues long: uncharacterized protein (203 aa).

This is an uncharacterized protein from Chlorobium limicola.